The primary structure comprises 246 residues: 2-deoxyglucose-6-phosphate phosphatase 1 (246 aa).

Asp83 (nucleophile) is an active-site residue. Asp83 contributes to the Mg(2+) binding site. Substrate contacts are provided by residues Asp83, Glu92, and 146 to 149 (DVKN). Residue Asp183 participates in Mg(2+) binding.

Belongs to the HAD-like hydrolase superfamily. DOG/GPP family. The cofactor is Mg(2+).

It catalyses the reaction 2-deoxy-D-glucose 6-phosphate + H2O = 2-deoxy-D-glucose + phosphate. Phosphatase that is active on 2-deoxy-D-glucose 6-phosphate (2-DOG-6P), as well as on fructose-1-P. The sequence is that of 2-deoxyglucose-6-phosphate phosphatase 1 from Saccharomyces cerevisiae (strain ATCC 204508 / S288c) (Baker's yeast).